The sequence spans 159 residues: NADH-quinone oxidoreductase subunit B (159 aa).

Residues Cys32, Cys33, Cys97, and Cys126 each coordinate [4Fe-4S] cluster.

This sequence belongs to the complex I 20 kDa subunit family. As to quaternary structure, NDH-1 is composed of 14 different subunits. Subunits NuoB, C, D, E, F, and G constitute the peripheral sector of the complex. [4Fe-4S] cluster is required as a cofactor.

It localises to the cell inner membrane. It catalyses the reaction a quinone + NADH + 5 H(+)(in) = a quinol + NAD(+) + 4 H(+)(out). Its function is as follows. NDH-1 shuttles electrons from NADH, via FMN and iron-sulfur (Fe-S) centers, to quinones in the respiratory chain. The immediate electron acceptor for the enzyme in this species is believed to be ubiquinone. Couples the redox reaction to proton translocation (for every two electrons transferred, four hydrogen ions are translocated across the cytoplasmic membrane), and thus conserves the redox energy in a proton gradient. The sequence is that of NADH-quinone oxidoreductase subunit B from Helicobacter pylori (strain P12).